Reading from the N-terminus, the 163-residue chain is Retinoic acid receptor responder protein 2 (163 aa).

Residues 1–20 (MKYLLISLALWLGMVGIHGT) form the signal peptide. Intrachain disulfides connect cysteine 79/cysteine 89, cysteine 100/cysteine 119, and cysteine 103/cysteine 135. A propeptide spanning residues 158–163 (RALKHK) is cleaved from the precursor.

In terms of processing, secreted in an inactive precursor form, prochemerin, which is proteolytically processed by a variety of extracellular proteases to generate forms with differing levels of bioactivity. For example, the removal of six amino acids results in chemerin-157, which exhibits the highest activity, while removal of seven amino acids results in chemerin-156 which has slightly less activity. Some proteases are able to cleave at more than one site and chemerin forms may be sequentially processed by different enzymes to modulate activity levels. The coordinated expression and activity of chemerin-modifying enzymes is essential for regulating its bioactivation, inactivation and, consequently, biological function. Cathepsin G cleaves seven C-terminal amino acids from prochemerin (chemerin-156), elastase is able to cleave six (chemerin-157), eight (chemerin-155) or eleven (chemerin-152), plasmin cleaves five amino acids (chemerin-158), and tryptase cleaves five (chemerin-158) or eight (chemerin-155). Multiple cleavages might be required to fully activate chemerin, with an initial tryptase cleavage resulting in chemerin with low activity (chemerin-158), and a second cleavage by carboxypeptidase N or B producing highly active chemerin (chemerin-157).

It localises to the secreted. Adipocyte-secreted protein (adipokine) that regulates adipogenesis, metabolism and inflammation through activation of the chemokine-like receptor 1 (CMKLR1). Also acts as a ligand for CMKLR2. Can also bind to C-C chemokine receptor-like 2 (CCRL2), but with a lower affinity than it does to CMKLR1 or CMKLR2. Positively regulates adipocyte differentiation, modulates the expression of adipocyte genes involved in lipid and glucose metabolism and might play a role in angiogenesis, a process essential for the expansion of white adipose tissue. Also acts as a pro-inflammatory adipokine, causing an increase in secretion of pro-inflammatory and prodiabetic adipokines, which further impair adipose tissue metabolic function and have negative systemic effects including impaired insulin sensitivity, altered glucose and lipid metabolism, and a decrease in vascular function in other tissues. Can have both pro- and anti-inflammatory properties depending on the modality of enzymatic cleavage by different classes of proteases. Acts as a chemotactic factor for leukocyte populations expressing CMKLR1, particularly immature plasmacytoid dendritic cells, but also immature myeloid DCs, macrophages and natural killer cells. Exerts an anti-inflammatory role by preventing TNF/TNFA-induced VCAM1 expression and monocytes adhesion in vascular endothelial cells. The effect is mediated via inhibiting activation of NF-kappa-B and CRK/p38 through stimulation of AKT1/NOS3 signaling and nitric oxide production. Its dual role in inflammation and metabolism might provide a link Exhibits an antimicrobial function in the skin. This is Retinoic acid receptor responder protein 2 (RARRES2) from Cricetulus griseus (Chinese hamster).